We begin with the raw amino-acid sequence, 334 residues long: Leukocyte cell-derived chemotaxin 1 (334 aa).

A helical transmembrane segment spans residues 46-66 (VVLISGAVLLLFGAIGAFYFW). Residues 105 to 201 (GSGAEEAIEV…FCGDLPIFWL (97 aa)) form the BRICHOS domain. Cysteine 132 and cysteine 193 are disulfide-bonded. The propeptide occupies 211 to 214 (RERR). The disordered stretch occupies residues 212–268 (ERREVVRSSAPSTTRRPHSEPRGNAGPGRLSNRTRPSVQDDEEPFNPDNPYHQQEGE). Residue asparagine 243 is glycosylated (N-linked (GlcNAc...) asparagine). 4 disulfide bridges follow: cysteine 282–cysteine 286, cysteine 283–cysteine 323, cysteine 293–cysteine 317, and cysteine 297–cysteine 313.

This sequence belongs to the chondromodulin-1 family. Post-translationally, after cleavage, the post-translationally modified ChM-I is secreted as a glycoprotein. As to expression, detected in cartilage, cardiac valves and valvular interstitial cells (at protein level). Expressed in eye.

It localises to the secreted. Its subcellular location is the extracellular space. It is found in the extracellular matrix. The protein localises to the endomembrane system. In terms of biological role, bifunctional growth regulator that stimulates the growth of cultured chondrocytes in the presence of basic fibroblast growth factor (FGF) but inhibits the growth of cultured vascular endothelial cells. May contribute to the rapid growth of cartilage and vascular invasion prior to the replacement of cartilage by bone during endochondral bone development. Inhibits in vitro tube formation and mobilization of endothelial cells. Plays a role as antiangiogenic factor in cardiac valves to suppress neovascularization. In Rattus norvegicus (Rat), this protein is Leukocyte cell-derived chemotaxin 1.